A 503-amino-acid polypeptide reads, in one-letter code: MQRSNARSRSNINSDMVDPPEVQTSPGNHRSSPSTAAKPKSKRTKSIIFVIVACVTIALGLLFIGYSILRSGRNRRVSLHYSVIIDGGSSGTRVHVFGYRIESGKPVFDFGEENYASLKLSPGLSAYADNPEGVSESVTELVEFAKKRVHKGKLKKSDIRLMATAGMRLLELPVQEQILDVTRRVLRSSGFDFRDEWASVISGSDEGVYAWVVANHALGSLGGEPLKTTGIVELGGASAQVTFVSTELVPSEFSRTLAYGNVSYNLYSHSFLDFGQDAAQEKLSESLYNSAANSTGEGIVPDPCIPKGYILETNLQKDLPGFLADKGKFTATLQAAGNFSECRSAAFAMLQEEKGKCTYKRCSIGSIFTPNLQGSFLATENFFHTSKFFGLGEKEWLSEMILAGKRFCGEEWSKLKVKYPTFKDENLLRYCFSSAYIISMLHDSLGVALDDERIKYASKAGEEDIPLDWALGAFILNTATATFDYSGKSRKILDLSNVAKYKI.

A compositionally biased stretch (low complexity) spans 1–14 (MQRSNARSRSNINS). The segment at 1 to 39 (MQRSNARSRSNINSDMVDPPEVQTSPGNHRSSPSTAAKP) is disordered. At 1 to 45 (MQRSNARSRSNINSDMVDPPEVQTSPGNHRSSPSTAAKPKSKRTK) the chain is on the cytoplasmic side. A helical; Signal-anchor for type II membrane protein membrane pass occupies residues 46-66 (SIIFVIVACVTIALGLLFIGY). The Extracellular segment spans residues 67 to 503 (SILRSGRNRR…DLSNVAKYKI (437 aa)). 83–93 (VIIDGGSSGTR) is a binding site for ATP. The Proton acceptor role is filled by Glu-206. 230–240 (GIVELGGASAQ) provides a ligand contact to ATP. Asn-261, Asn-293, and Asn-338 each carry an N-linked (GlcNAc...) asparagine glycan.

Belongs to the GDA1/CD39 NTPase family. Ca(2+) is required as a cofactor. Expressed both in the primary root and lateral root but not in the rosette leaves.

It is found in the membrane. It catalyses the reaction a ribonucleoside 5'-triphosphate + 2 H2O = a ribonucleoside 5'-phosphate + 2 phosphate + 2 H(+). Catalyzes the hydrolysis of phosphoanhydride bonds of nucleoside tri- and di-phosphates. The polypeptide is Probable apyrase 4 (APY4) (Arabidopsis thaliana (Mouse-ear cress)).